The sequence spans 378 residues: Cytochrome b (378 aa).

4 helical membrane-spanning segments follow: residues 32–52 (FGSL…FLAM), 76–97 (WLIR…FLHV), 112–132 (WNIG…GYVL), and 177–197 (FFAF…VHLL). The heme b site is built by histidine 82 and histidine 96. The heme b site is built by histidine 181 and histidine 195. Histidine 200 is an a ubiquinone binding site. 4 helical membrane-spanning segments follow: residues 225–245 (IKDA…VLFF), 287–307 (LGGV…PILH), 319–339 (LSQC…WIGG), and 346–366 (FITI…FALP).

It belongs to the cytochrome b family. The cytochrome bc1 complex contains 11 subunits: 3 respiratory subunits (MT-CYB, CYC1 and UQCRFS1), 2 core proteins (UQCRC1 and UQCRC2) and 6 low-molecular weight proteins (UQCRH/QCR6, UQCRB/QCR7, UQCRQ/QCR8, UQCR10/QCR9, UQCR11/QCR10 and a cleavage product of UQCRFS1). This cytochrome bc1 complex then forms a dimer. Requires heme b as cofactor.

Its subcellular location is the mitochondrion inner membrane. Functionally, component of the ubiquinol-cytochrome c reductase complex (complex III or cytochrome b-c1 complex) that is part of the mitochondrial respiratory chain. The b-c1 complex mediates electron transfer from ubiquinol to cytochrome c. Contributes to the generation of a proton gradient across the mitochondrial membrane that is then used for ATP synthesis. This Sciurus aberti (Abert's squirrel) protein is Cytochrome b (MT-CYB).